The following is a 1221-amino-acid chain: A disintegrin and metalloproteinase with thrombospondin motifs 18 (1221 aa).

The first 47 residues, 1-47 (MECALLLACAFPAAGSGPPRGLAGLGRVAKALQLCCLCCASVAAALA), serve as a signal peptide directing secretion. Residues 48–284 (SDSSSGASGL…EYGSSGRPRR (237 aa)) constitute a propeptide that is removed on maturation. N-linked (GlcNAc...) asparagine glycans are attached at residues Asn151 and Asn190. A Cysteine switch motif is present at residues 252 to 259 (HFCGRRKK). Cys254 lines the Zn(2+) pocket. Residues 258-291 (KKYAPKPPTEDTYLRFDEYGSSGRPRRSAGKSQK) are disordered. Residues 265 to 275 (PTEDTYLRFDE) show a composition bias toward basic and acidic residues. One can recognise a Peptidase M12B domain in the interval 293 to 498 (LNVETLVVAD…PQAGCLVDEP (206 aa)). Asn313 is a glycosylation site (N-linked (GlcNAc...) asparagine). 11 cysteine pairs are disulfide-bonded: Cys369–Cys420, Cys395–Cys402, Cys414–Cys493, Cys453–Cys477, Cys521–Cys546, Cys532–Cys553, Cys541–Cys572, Cys566–Cys577, Cys601–Cys638, Cys605–Cys643, and Cys616–Cys628. His436 is a Zn(2+) binding site. The active site involves Glu437. 2 residues coordinate Zn(2+): His440 and His446. Residues 498-577 (PKQAGQYKYP…LSMWCRQGQC (80 aa)) form the Disintegrin domain. The TSP type-1 1 domain occupies 589 to 644 (HGQWSAWSKWSECSRTCGGGVKFQERHCNNPKPQYGGLFCPGSSRIYQLCNINPCN). N-linked (GlcNAc...) asparagine glycosylation is found at Asn745, Asn838, and Asn909. Residues 750 to 876 (FYKGLYLNQH…TPPATKRPAY (127 aa)) are spacer. TSP type-1 domains follow at residues 931-990 (CPAY…NSHA), 991-1049 (CPPQ…GRCP), 1052-1116 (SRLQ…RACP), and 1123-1178 (MVAG…NFCP). The PLAC domain maps to 1184–1221 (EDPSCVDFFNWCHLVPQHGVCNHKFYGKQCCKSCTRKI).

Requires Zn(2+) as cofactor. In terms of processing, the precursor is cleaved by a furin endopeptidase. Post-translationally, glycosylated. Can be O-fucosylated by POFUT2 on a serine or a threonine residue found within the consensus sequence C1-X(2)-(S/T)-C2-G of the TSP type-1 repeat domains where C1 and C2 are the first and second cysteine residue of the repeat, respectively. Fucosylated repeats can then be further glycosylated by the addition of a beta-1,3-glucose residue by the glucosyltransferase, B3GALTL. Fucosylation mediates the efficient secretion of ADAMTS family members. Can also be C-glycosylated with one or two mannose molecules on tryptophan residues within the consensus sequence W-X-X-W of the TPRs, and N-glycosylated. These other glycosylations can also facilitate secretion. Expressed in fetal lung, liver, and kidney and in adult brain, prostate, submaxillary gland, and endothelium.

The protein resides in the secreted. The protein localises to the extracellular space. It is found in the extracellular matrix. The protein is A disintegrin and metalloproteinase with thrombospondin motifs 18 (ADAMTS18) of Homo sapiens (Human).